The primary structure comprises 65 residues: U2-theraphotoxin-Pc1a (65 aa).

Residues 1–20 (MGFKLVLFIAVLTLVGSSNA) form the signal peptide. The propeptide occupies 21–36 (EISAKMDSRDSPMIQE). 3 disulfide bridges follow: cysteine 39–cysteine 56, cysteine 46–cysteine 59, and cysteine 55–cysteine 64.

This sequence belongs to the neurotoxin 36 family. 02 subfamily. In terms of tissue distribution, expressed by the venom gland.

The protein resides in the secreted. In terms of biological role, possesses strong antiplasmodial activity against the intra-erythrocyte stage of P.falciparum in vitro. IC(50) for inhibiting P.falciparum growth is 1.15 uM. Specifically interacts with infected erythrocytes. Does not lyse erythrocytes, is not cytotoxic to nucleated mammalian cells, and does not inhibit neuromuscular function. Has neither antibacterial nor antifungal activity. This Psalmopoeus cambridgei (Trinidad chevron tarantula) protein is U2-theraphotoxin-Pc1a.